The sequence spans 283 residues: MTLTTTHIADPSHASPLGKATEYQSHYAPELLYPIPRQLKRSELGITDANLPFVGEDLWNAYELSWLNSKGKPVVAVGTFRVPANSPNLIESKSFKLYLNSFNQSSFDNIAAVSATMSRDLSAAAGSPIIVTLEPLSASPLASIGTPDGILLDELDITCDRYQPEPALLATLPGENVEETLYSHLLKSNCLVTGQPDWAMVVIRYRGKPIDRAGLLRYIVSFRNHNEFHEQCVERIFSDIRVRCQPEVLAVHARYTRRGGLDINPFRSTGDYAAPDNTREIRQ.

90 to 92 lines the substrate pocket; it reads IES. 92–93 is an NADPH binding site; that stretch reads SK. Cysteine 190 functions as the Thioimide intermediate in the catalytic mechanism. Aspartate 197 serves as the catalytic Proton donor. 229-230 is a binding site for substrate; it reads HE. NADPH is bound at residue 258 to 259; that stretch reads RG.

Belongs to the GTP cyclohydrolase I family. QueF type 2 subfamily. As to quaternary structure, homodimer.

It localises to the cytoplasm. It catalyses the reaction 7-aminomethyl-7-carbaguanine + 2 NADP(+) = 7-cyano-7-deazaguanine + 2 NADPH + 3 H(+). The protein operates within tRNA modification; tRNA-queuosine biosynthesis. In terms of biological role, catalyzes the NADPH-dependent reduction of 7-cyano-7-deazaguanine (preQ0) to 7-aminomethyl-7-deazaguanine (preQ1). The protein is NADPH-dependent 7-cyano-7-deazaguanine reductase of Dechloromonas aromatica (strain RCB).